Consider the following 178-residue polypeptide: ATP synthase subunit delta (178 aa).

This sequence belongs to the ATPase delta chain family. F-type ATPases have 2 components, F(1) - the catalytic core - and F(0) - the membrane proton channel. F(1) has five subunits: alpha(3), beta(3), gamma(1), delta(1), epsilon(1). F(0) has three main subunits: a(1), b(2) and c(10-14). The alpha and beta chains form an alternating ring which encloses part of the gamma chain. F(1) is attached to F(0) by a central stalk formed by the gamma and epsilon chains, while a peripheral stalk is formed by the delta and b chains.

It is found in the cell inner membrane. In terms of biological role, f(1)F(0) ATP synthase produces ATP from ADP in the presence of a proton or sodium gradient. F-type ATPases consist of two structural domains, F(1) containing the extramembraneous catalytic core and F(0) containing the membrane proton channel, linked together by a central stalk and a peripheral stalk. During catalysis, ATP synthesis in the catalytic domain of F(1) is coupled via a rotary mechanism of the central stalk subunits to proton translocation. Its function is as follows. This protein is part of the stalk that links CF(0) to CF(1). It either transmits conformational changes from CF(0) to CF(1) or is implicated in proton conduction. The protein is ATP synthase subunit delta of Acinetobacter baumannii (strain SDF).